Here is a 182-residue protein sequence, read N- to C-terminus: uncharacterized protein (182 aa).

It localises to the plastid. The protein resides in the cyanelle. This is an uncharacterized protein from Cyanophora paradoxa.